Consider the following 443-residue polypeptide: ATP-dependent protease ATPase subunit HslU (443 aa).

Residues I18, 60–65 (GVGKTE), D256, E321, and R393 contribute to the ATP site.

It belongs to the ClpX chaperone family. HslU subfamily. As to quaternary structure, a double ring-shaped homohexamer of HslV is capped on each side by a ring-shaped HslU homohexamer. The assembly of the HslU/HslV complex is dependent on binding of ATP.

It localises to the cytoplasm. Functionally, ATPase subunit of a proteasome-like degradation complex; this subunit has chaperone activity. The binding of ATP and its subsequent hydrolysis by HslU are essential for unfolding of protein substrates subsequently hydrolyzed by HslV. HslU recognizes the N-terminal part of its protein substrates and unfolds these before they are guided to HslV for hydrolysis. The sequence is that of ATP-dependent protease ATPase subunit HslU from Escherichia coli O157:H7 (strain EC4115 / EHEC).